Consider the following 131-residue polypeptide: MSRSLGIPVKLLHEASGHIVTVELKSGELYRGSMIECEDNWNCQLEDITYTAKDGKVSQLEHVFIRGSKVRFMVIPDILKHAPMFKRLDARIKGKSSSLGVGRGRGAMRGKPAAGPGRGTGGRGAVPPVRR.

The Sm domain occupies 7-79 (IPVKLLHEAS…VRFMVIPDIL (73 aa)). Residues 96-131 (SSSLGVGRGRGAMRGKPAAGPGRGTGGRGAVPPVRR) are disordered.

The protein belongs to the snRNP core protein family. Expressed in young seedlings, roots, leaves, flowers and immature siliques.

The protein localises to the cytoplasm. The protein resides in the cytosol. Its subcellular location is the nucleus. In terms of biological role, core component of the spliceosomal U1, U2, U4 and U5 small nuclear ribonucleoproteins (snRNPs), the building blocks of the spliceosome. May play a major role in the splicing of cellular pre-mRNAs. Required for normal plant development. The chain is Small nuclear ribonucleoprotein SmD3b from Arabidopsis thaliana (Mouse-ear cress).